The sequence spans 152 residues: Protein Smg homolog (152 aa).

Belongs to the Smg family.

This chain is Protein Smg homolog, found in Nitrosomonas eutropha (strain DSM 101675 / C91 / Nm57).